The following is a 176-amino-acid chain: Ribosome rescue factor SmrB (176 aa).

A Smr domain is found at 98-173 (LDLHGLTQKQ…GTAALLVLVE (76 aa)).

This sequence belongs to the SmrB family. Associates with collided ribosomes, but not with correctly translating polysomes.

In terms of biological role, acts as a ribosome collision sensor. Detects stalled/collided disomes (pairs of ribosomes where the leading ribosome is stalled and a second ribosome has collided with it) and endonucleolytically cleaves mRNA at the 5' boundary of the stalled ribosome. Stalled/collided disomes form a new interface (primarily via the 30S subunits) that binds SmrB. Cleaved mRNA becomes available for tmRNA ligation, leading to ribosomal subunit dissociation and rescue of stalled ribosomes. The sequence is that of Ribosome rescue factor SmrB from Yersinia enterocolitica serotype O:8 / biotype 1B (strain NCTC 13174 / 8081).